Consider the following 424-residue polypeptide: UDP-N-acetylglucosamine 1-carboxyvinyltransferase (424 aa).

22-23 (KN) contributes to the phosphoenolpyruvate binding site. A UDP-N-acetyl-alpha-D-glucosamine-binding site is contributed by R93. The active-site Proton donor is the C117. C117 carries the post-translational modification 2-(S-cysteinyl)pyruvic acid O-phosphothioketal. UDP-N-acetyl-alpha-D-glucosamine-binding positions include 122-126 (RPVDL), D307, and I329.

This sequence belongs to the EPSP synthase family. MurA subfamily.

It localises to the cytoplasm. The enzyme catalyses phosphoenolpyruvate + UDP-N-acetyl-alpha-D-glucosamine = UDP-N-acetyl-3-O-(1-carboxyvinyl)-alpha-D-glucosamine + phosphate. It functions in the pathway cell wall biogenesis; peptidoglycan biosynthesis. In terms of biological role, cell wall formation. Adds enolpyruvyl to UDP-N-acetylglucosamine. The polypeptide is UDP-N-acetylglucosamine 1-carboxyvinyltransferase (Chlorobaculum parvum (strain DSM 263 / NCIMB 8327) (Chlorobium vibrioforme subsp. thiosulfatophilum)).